Reading from the N-terminus, the 374-residue chain is ATPase ASNA1 homolog (374 aa).

Position 44–51 (44–51 (KGGVGKTT)) interacts with ATP. Asp73 is a catalytic residue. ATP-binding residues include Glu244 and Asn271.

The protein belongs to the arsA ATPase family. Homodimer.

Its subcellular location is the cytoplasm. It is found in the endoplasmic reticulum. In terms of biological role, ATPase required for the post-translational delivery of tail-anchored (TA) proteins to the endoplasmic reticulum. Recognizes and selectively binds the transmembrane domain of TA proteins in the cytosol. This complex then targets to the endoplasmic reticulum by membrane-bound receptors, where the tail-anchored protein is released for insertion. This process is regulated by ATP binding and hydrolysis. ATP binding drives the homodimer towards the closed dimer state, facilitating recognition of newly synthesized TA membrane proteins. ATP hydrolysis is required for insertion. Subsequently, the homodimer reverts towards the open dimer state, lowering its affinity for the membrane-bound receptor, and returning it to the cytosol to initiate a new round of targeting. This Plasmodium vivax (strain Salvador I) protein is ATPase ASNA1 homolog.